Consider the following 153-residue polypeptide: Subtilisin propeptide-like protein (153 aa).

An N-terminal signal peptide occupies residues 1–27 (MKFLFAFNFFSLYIYLYEFLCIHLCGS). A dispensable for parasite growth in host erythrocytes region spans residues 127 to 153 (QISHLSEFIQYLLNKNVCIEFNQNVML).

The protein resides in the secreted. It localises to the parasitophorous vacuole lumen. The protein localises to the cell membrane. In terms of biological role, acts as a specific inhibitor of subtilisin-like protease SUB1. The sequence is that of Subtilisin propeptide-like protein from Plasmodium falciparum (isolate 3D7).